Here is a 160-residue protein sequence, read N- to C-terminus: Protransforming growth factor alpha (160 aa).

Residues 1-23 (MVPSAGQFALFALGILLAVCQAL) form the signal peptide. The propeptide at 24-39 (ENSTSALSADPPIAAA) is removed in mature form. Topologically, residues 24-98 (ENSTSALSAD…AVVAASQKKQ (75 aa)) are extracellular. N-linked (GlcNAc...) asparagine glycosylation occurs at Asn-25. Residues 43–83 (HFNDCPDSHSQFCFHGTCRFLVQEDKPACVCHSGYVGARCE) enclose the EGF-like domain. Cystine bridges form between Cys-47–Cys-60, Cys-55–Cys-71, and Cys-73–Cys-82. A propeptide spans 90–160 (VVAASQKKQA…TACCHSETVV (71 aa)) (removed in mature form). Residues 99 to 124 (AITALVVVSIVALAVLIITCVLIHCC) form a helical membrane-spanning segment. The Cytoplasmic segment spans residues 125–160 (QVRKHCEWCRALICRHEKPSALLKGRTACCHSETVV). S-palmitoyl cysteine attachment occurs at residues Cys-153 and Cys-154.

As to quaternary structure, interacts with the PDZ domains of MAGI3, SDCBP and SNTA1. The interaction with SDCBP, is required for the targeting to the cell surface. In the endoplasmic reticulum, in its immature form (i.e. with a prosegment and lacking full N-glycosylation), interacts with CNIH. In the Golgi apparatus, may form a complex with CNIH and GORASP2. Interacts (via cytoplasmic C-terminal domain) with NKD2.

Its subcellular location is the secreted. The protein localises to the extracellular space. The protein resides in the cell membrane. Its function is as follows. TGF alpha is a mitogenic polypeptide that is able to bind to the EGF receptor/EGFR and to act synergistically with TGF beta to promote anchorage-independent cell proliferation in soft agar. The polypeptide is Protransforming growth factor alpha (TGFA) (Sus scrofa (Pig)).